Here is a 443-residue protein sequence, read N- to C-terminus: Thymidine phosphorylase (443 aa).

It belongs to the thymidine/pyrimidine-nucleoside phosphorylase family. Homodimer.

It carries out the reaction thymidine + phosphate = 2-deoxy-alpha-D-ribose 1-phosphate + thymine. It functions in the pathway pyrimidine metabolism; dTMP biosynthesis via salvage pathway; dTMP from thymine: step 1/2. In terms of biological role, the enzymes which catalyze the reversible phosphorolysis of pyrimidine nucleosides are involved in the degradation of these compounds and in their utilization as carbon and energy sources, or in the rescue of pyrimidine bases for nucleotide synthesis. The chain is Thymidine phosphorylase from Shewanella woodyi (strain ATCC 51908 / MS32).